A 293-amino-acid polypeptide reads, in one-letter code: Light-independent protochlorophyllide reductase iron-sulfur ATP-binding protein (293 aa).

ATP-binding positions include 10–15 and K39; that span reads GIGKST. Residue S14 coordinates Mg(2+). C95 and C129 together coordinate [4Fe-4S] cluster. 180 to 181 contacts ATP; the sequence is NR.

Belongs to the NifH/BchL/ChlL family. As to quaternary structure, homodimer. Protochlorophyllide reductase is composed of three subunits; ChlL, ChlN and ChlB. It depends on [4Fe-4S] cluster as a cofactor.

Its subcellular location is the plastid. The protein resides in the chloroplast. The enzyme catalyses chlorophyllide a + oxidized 2[4Fe-4S]-[ferredoxin] + 2 ADP + 2 phosphate = protochlorophyllide a + reduced 2[4Fe-4S]-[ferredoxin] + 2 ATP + 2 H2O. Its pathway is porphyrin-containing compound metabolism; chlorophyll biosynthesis (light-independent). Functionally, component of the dark-operative protochlorophyllide reductase (DPOR) that uses Mg-ATP and reduced ferredoxin to reduce ring D of protochlorophyllide (Pchlide) to form chlorophyllide a (Chlide). This reaction is light-independent. The L component serves as a unique electron donor to the NB-component of the complex, and binds Mg-ATP. The polypeptide is Light-independent protochlorophyllide reductase iron-sulfur ATP-binding protein (Adiantum capillus-veneris (Maidenhair fern)).